The primary structure comprises 141 residues: Cytochrome c-type biogenesis protein CcmE (141 aa).

Residues methionine 1–arginine 7 lie on the Cytoplasmic side of the membrane. Residues leucine 8–alanine 28 form a helical; Signal-anchor for type II membrane protein membrane-spanning segment. Residues leucine 29 to glycine 141 lie on the Periplasmic side of the membrane. Residues histidine 125 and tyrosine 129 each coordinate heme.

Belongs to the CcmE/CycJ family.

It is found in the cell inner membrane. In terms of biological role, heme chaperone required for the biogenesis of c-type cytochromes. Transiently binds heme delivered by CcmC and transfers the heme to apo-cytochromes in a process facilitated by CcmF and CcmH. The polypeptide is Cytochrome c-type biogenesis protein CcmE (Hyphomonas neptunium (strain ATCC 15444)).